A 915-amino-acid chain; its full sequence is Protein ZDS1 (915 aa).

Disordered stretches follow at residues 1-28 (MSNRDNESMLRTTSSDKAIASQRDKRKS), 69-134 (GESS…KKGV), 179-261 (LSDN…SETV), 310-330 (GSYSDKKDQPQPEGHYDEGDI), 412-433 (KSPFRQQDEDSENMSSPGSIGD), and 464-807 (KVRN…SILP). Residues 74–93 (RRSWSGTTSSSASMPSDTTT) show a composition bias toward low complexity. A compositionally biased stretch (polar residues) spans 115–125 (GIESSNKTKQG). Positions 202–212 (DKESQSYENKE) are enriched in basic and acidic residues. Position 229 is a phosphoserine (S229). Positions 243 to 252 (EFDDNEDDDN) are enriched in acidic residues. Over residues 313–327 (SDKKDQPQPEGHYDE) the composition is skewed to basic and acidic residues. Residues 464 to 480 (KVRNDTVEQDLELREGT) are compositionally biased toward basic and acidic residues. The span at 515–530 (DDNEENQGDDENEENV) shows a compositional bias: acidic residues. Basic and acidic residues-rich tracts occupy residues 531–541 (DSQRMELDNSK) and 552–562 (EKTEVSNKEEM). Composition is skewed to low complexity over residues 565–574 (SSTSTATSQT) and 597–609 (SSSPSSSPSSSPS). 2 stretches are compositionally biased toward basic residues: residues 618 to 627 (VRVRKSKKLG) and 642 to 656 (NRPRPHRHHHSRHGS). Low complexity predominate over residues 668–679 (QPQQQIPLQPQL). A compositionally biased stretch (polar residues) spans 696-710 (LPQLQPAVSVSSTKS). 2 stretches are compositionally biased toward basic and acidic residues: residues 711-721 (NSRDREEEEAK) and 742-751 (VQKENTDEQK). The segment covering 752 to 793 (AQLQAPAQEQVQTSVPVQASAPVQNSAPVQTSAPVEASAQTQ) has biased composition (polar residues).

To yeast ZDS2/MCS1. As to quaternary structure, interacts with BCY1, DBP5, GFD1 and SKG6.

Its subcellular location is the cytoplasm. In terms of biological role, has a role in establishing cell polarity. Together with cAMP-dependent protein kinase regulatory subunit BCY1, provides a negative feedback control on the cell wall integrity-signaling pathway by acting as a negative regulator of MAP kinase SLT2/MPK1. In heat-stressed cells appears to play a role in localizing BCY1 to the cytoplasm. Seems to interact with, and down-regulate, CDC42. Also acts as a suppressor of PKC1. May act as an integration point for distinct signaling pathways helping to maintain a balance among these different pathways. When associated with DBP5, GFD1 and nucleoporins at the cytosolic fibrils of the nuclear pore complex, is required for mRNA export form the nucleus. The polypeptide is Protein ZDS1 (ZDS1) (Saccharomyces cerevisiae (strain ATCC 204508 / S288c) (Baker's yeast)).